Reading from the N-terminus, the 350-residue chain is Holliday junction branch migration complex subunit RuvB (350 aa).

The large ATPase domain (RuvB-L) stretch occupies residues 1 to 184 (MSKTPERLVT…FGIPIRLEFY (184 aa)). Residues Leu23, Arg24, Gly65, Lys68, Thr69, Thr70, 131 to 133 (EDF), Arg174, Tyr184, and Arg221 contribute to the ATP site. Thr69 is a binding site for Mg(2+). The segment at 185-255 (TIEELERIVL…LADKALSLLD (71 aa)) is small ATPAse domain (RuvB-S). Residues 258–350 (PIGLDQMDRR…GLFPDQSEED (93 aa)) form a head domain (RuvB-H) region. Arg294, Arg313, and Arg318 together coordinate DNA.

Belongs to the RuvB family. In terms of assembly, homohexamer. Forms an RuvA(8)-RuvB(12)-Holliday junction (HJ) complex. HJ DNA is sandwiched between 2 RuvA tetramers; dsDNA enters through RuvA and exits via RuvB. An RuvB hexamer assembles on each DNA strand where it exits the tetramer. Each RuvB hexamer is contacted by two RuvA subunits (via domain III) on 2 adjacent RuvB subunits; this complex drives branch migration. In the full resolvosome a probable DNA-RuvA(4)-RuvB(12)-RuvC(2) complex forms which resolves the HJ.

Its subcellular location is the cytoplasm. It carries out the reaction ATP + H2O = ADP + phosphate + H(+). Functionally, the RuvA-RuvB-RuvC complex processes Holliday junction (HJ) DNA during genetic recombination and DNA repair, while the RuvA-RuvB complex plays an important role in the rescue of blocked DNA replication forks via replication fork reversal (RFR). RuvA specifically binds to HJ cruciform DNA, conferring on it an open structure. The RuvB hexamer acts as an ATP-dependent pump, pulling dsDNA into and through the RuvAB complex. RuvB forms 2 homohexamers on either side of HJ DNA bound by 1 or 2 RuvA tetramers; 4 subunits per hexamer contact DNA at a time. Coordinated motions by a converter formed by DNA-disengaged RuvB subunits stimulates ATP hydrolysis and nucleotide exchange. Immobilization of the converter enables RuvB to convert the ATP-contained energy into a lever motion, pulling 2 nucleotides of DNA out of the RuvA tetramer per ATP hydrolyzed, thus driving DNA branch migration. The RuvB motors rotate together with the DNA substrate, which together with the progressing nucleotide cycle form the mechanistic basis for DNA recombination by continuous HJ branch migration. Branch migration allows RuvC to scan DNA until it finds its consensus sequence, where it cleaves and resolves cruciform DNA. The protein is Holliday junction branch migration complex subunit RuvB of Beijerinckia indica subsp. indica (strain ATCC 9039 / DSM 1715 / NCIMB 8712).